A 309-amino-acid polypeptide reads, in one-letter code: Sulfate adenylyltransferase subunit 2 (309 aa).

This sequence belongs to the PAPS reductase family. CysD subfamily. Heterodimer composed of CysD, the smaller subunit, and CysN.

The enzyme catalyses sulfate + ATP + H(+) = adenosine 5'-phosphosulfate + diphosphate. It participates in sulfur metabolism; hydrogen sulfide biosynthesis; sulfite from sulfate: step 1/3. In terms of biological role, with CysN forms the ATP sulfurylase (ATPS) that catalyzes the adenylation of sulfate producing adenosine 5'-phosphosulfate (APS) and diphosphate, the first enzymatic step in sulfur assimilation pathway. APS synthesis involves the formation of a high-energy phosphoric-sulfuric acid anhydride bond driven by GTP hydrolysis by CysN coupled to ATP hydrolysis by CysD. The polypeptide is Sulfate adenylyltransferase subunit 2 (Mycobacterium bovis (strain ATCC BAA-935 / AF2122/97)).